We begin with the raw amino-acid sequence, 178 residues long: Ribulose bisphosphate carboxylase small subunit, chloroplastic (178 aa).

A chloroplast-targeting transit peptide spans 1 to 54 (MASSMISSPAVTTVNRAGAGTVAPFTGLKSMAGFPTRKTNNDIASIASNGGRVQ).

This sequence belongs to the RuBisCO small chain family. Heterohexadecamer of 8 large and 8 small subunits.

The protein localises to the plastid. Its subcellular location is the chloroplast. Its function is as follows. RuBisCO catalyzes two reactions: the carboxylation of D-ribulose 1,5-bisphosphate, the primary event in carbon dioxide fixation, as well as the oxidative fragmentation of the pentose substrate. Both reactions occur simultaneously and in competition at the same active site. Although the small subunit is not catalytic it is essential for maximal activity. This chain is Ribulose bisphosphate carboxylase small subunit, chloroplastic, found in Glycine tabacina.